We begin with the raw amino-acid sequence, 107 residues long: Iron-binding protein IscA (107 aa).

3 residues coordinate Fe cation: Cys35, Cys99, and Cys101.

The protein belongs to the HesB/IscA family. As to quaternary structure, homodimer; may form tetramers and higher multimers. Fe cation is required as a cofactor.

Its function is as follows. Is able to transfer iron-sulfur clusters to apo-ferredoxin. Multiple cycles of [2Fe2S] cluster formation and transfer are observed, suggesting that IscA acts catalytically. Recruits intracellular free iron so as to provide iron for the assembly of transient iron-sulfur cluster in IscU in the presence of IscS, L-cysteine and the thioredoxin reductase system TrxA/TrxB. The polypeptide is Iron-binding protein IscA (Proteus mirabilis (strain HI4320)).